Consider the following 715-residue polypeptide: Polyribonucleotide nucleotidyltransferase (715 aa).

D489 and D495 together coordinate Mg(2+). Residues 556–615 form the KH domain; that stretch reads PRIETLRIPTEKIREVIGTGGKVIREICEKTGAKINIEDDGTVKVASSDGNSIKAAINWI. The region spanning 625–693 is the S1 motif domain; it reads GHIYDGTVVK…DRGKVRLSMR (69 aa).

The protein belongs to the polyribonucleotide nucleotidyltransferase family. It depends on Mg(2+) as a cofactor.

The protein resides in the cytoplasm. The enzyme catalyses RNA(n+1) + phosphate = RNA(n) + a ribonucleoside 5'-diphosphate. Involved in mRNA degradation. Catalyzes the phosphorolysis of single-stranded polyribonucleotides processively in the 3'- to 5'-direction. This Beijerinckia indica subsp. indica (strain ATCC 9039 / DSM 1715 / NCIMB 8712) protein is Polyribonucleotide nucleotidyltransferase.